Here is a 58-residue protein sequence, read N- to C-terminus: Large ribosomal subunit protein uL30 (58 aa).

The protein belongs to the universal ribosomal protein uL30 family. Part of the 50S ribosomal subunit.

In Azotobacter vinelandii (strain DJ / ATCC BAA-1303), this protein is Large ribosomal subunit protein uL30.